We begin with the raw amino-acid sequence, 637 residues long: Neuroendocrine convertase 2 (637 aa).

A signal peptide spans 1–24; the sequence is MEGGCGSQWKAAGFLFCVMVFASA. The propeptide occupies 25 to 108; that stretch reads ERPVFTNHFL…QQEGFDRKKR (84 aa). The region spanning 128-452 is the Peptidase S8 domain; sequence QWYLFNTGQA…YGVLDAGAMV (325 aa). Residues Asp166 and His207 each act as charge relay system in the active site. Cystine bridges form between Cys224-Cys375 and Cys316-Cys346. Asn374 carries an N-linked (GlcNAc...) asparagine glycan. The Charge relay system role is filled by Ser383. Residues 460 to 596 form the P/Homo B domain; the sequence is TVPERFHCVG…TLMLHGTQSA (137 aa). A disulfide bond links Cys467 and Cys493. Residues Asn513 and Asn523 are each glycosylated (N-linked (GlcNAc...) asparagine).

Belongs to the peptidase S8 family. Furin subfamily.

Its subcellular location is the cytoplasmic vesicle. The protein localises to the secretory vesicle. The protein resides in the secreted. It carries out the reaction Release of protein hormones and neuropeptides from their precursors, generally by hydrolysis of -Lys-Arg-|- bonds.. Functionally, serine endopeptidase which is involved in the processing of hormone and other protein precursors at sites comprised of pairs of basic amino acid residues. Responsible for the release of glucagon from proglucagon in pancreatic A cells. The protein is Neuroendocrine convertase 2 (Pcsk2) of Mus musculus (Mouse).